The chain runs to 485 residues: Glutathione gamma-glutamylcysteinyltransferase 1 (485 aa).

Positions methionine 1–arginine 221 constitute a Peptidase C83 domain. Catalysis depends on residues cysteine 56, histidine 162, and aspartate 180.

This sequence belongs to the phytochelatin synthase family. In terms of tissue distribution, expressed in roots and shoots.

It catalyses the reaction [Glu(-Cys)](n)-Gly + glutathione + H(+) = [Glu(-Cys)](n+1)-Gly + glycine. Requires cadmium for activity. Also activated in vitro or in heterologous system by Ag(+), Hg(+), Zn(2+), Cu(2+), Fe(2+) or Fe(3+) ions, but not by Co(2+) or Ni(2+) ions. Its function is as follows. Involved in the synthesis of phytochelatins (PC) and homophytochelatins (hPC), the heavy-metal-binding peptides of plants. Also involved in glutathione-conjugates degradation. This Arabidopsis thaliana (Mouse-ear cress) protein is Glutathione gamma-glutamylcysteinyltransferase 1 (PCS1).